Here is a 1957-residue protein sequence, read N- to C-terminus: Chromatin modification-related protein EAF1 A (1957 aa).

Disordered regions lie at residues 108–208 (ASPH…TDLV), 261–287 (NRVS…GSKT), 323–373 (GGSP…SHAN), and 449–469 (NQSH…ETEK). Over residues 140-151 (SENKSVEGERNL) the composition is skewed to basic and acidic residues. Polar residues-rich tracts occupy residues 261 to 270 (NRVSSNSLNT), 333 to 342 (GQKNSSTQLN), and 355 to 372 (TNRG…SSHA). The 79-residue stretch at 563 to 641 (CGTAPVEVRE…LSNAILQFWS (79 aa)) folds into the HSA domain. Disordered stretches follow at residues 833–909 (GSNS…AVQK) and 928–950 (AETS…DQTW). The segment covering 884–898 (TDASSGDTSSFQDEY) has biased composition (polar residues). Residues 1049–1105 (SGNPWSLFEDQALVVLVHDMGPNWELISDAMNSTLKIKCIYRNPTECKDRHKILMDK) enclose the SANT domain. Disordered stretches follow at residues 1107–1131 (AGDG…PGIP), 1282–1314 (TPVL…GLQS), 1344–1367 (LSGR…DRGH), 1449–1644 (QGNS…QQLN), 1687–1768 (PVRP…IAPA), 1804–1840 (ELSK…PQAS), and 1876–1957 (SSNT…TKVE). 6 stretches are compositionally biased toward polar residues: residues 1116 to 1125 (DSGNSQSYPS), 1290 to 1314 (AHPS…GLQS), 1344 to 1358 (LSGR…STPA), 1459 to 1472 (SNLS…TTPV), 1479 to 1492 (LSQQ…SHVL), and 1501 to 1510 (QSPSQATGAQ). 2 stretches are compositionally biased toward low complexity: residues 1523 to 1534 (QRYLQQQQQQQQ) and 1545 to 1562 (VQQP…NSPQ). Over residues 1563-1579 (TQPPVSPQPLSMPPVSP) the composition is skewed to pro residues. 5 stretches are compositionally biased toward polar residues: residues 1582–1595 (NINA…QKSQ), 1604–1618 (SPQS…QAGK), 1635–1644 (RQPTQGQQLN), 1691–1722 (DQQS…QQLP), and 1734–1758 (QQQM…CNIL). A compositionally biased stretch (low complexity) spans 1759 to 1768 (STSSPSIAPA). Over residues 1805-1815 (LSKKSQAERMP) the composition is skewed to basic and acidic residues. Composition is skewed to polar residues over residues 1819–1832 (QSVT…SMGT) and 1876–1894 (SSNT…NQGL). 2 stretches are compositionally biased toward basic and acidic residues: residues 1913 to 1922 (SEEKRPKLPE) and 1932 to 1942 (LASEEQPHLEE).

The protein belongs to the EAF1 family. In terms of assembly, component of the NuA4 histone acetyltransferase complex. Interacts with ARP4 and SWC4, and (via HSA domain) with TAF14 and TAF14B. As to expression, expressed in leaves.

Its subcellular location is the nucleus. Its function is as follows. Component of the NuA4 histone acetyltransferase complex which is involved in transcriptional activation of selected genes principally by acetylation of nucleosomal histone H4 and H2A. This Arabidopsis thaliana (Mouse-ear cress) protein is Chromatin modification-related protein EAF1 A (EAF1A).